Consider the following 2135-residue polypeptide: Plexin-B1 (2135 aa).

The signal sequence occupies residues 1 to 19; that stretch reads MPALGPALLQALWAGWVLT. One can recognise a Sema domain in the interval 20 to 479; sequence LQPLPPTAFT…TQSTLLKVPV (460 aa). The Extracellular segment spans residues 20 to 1490; it reads LQPLPPTAFT…SPGAFPVAAQ (1471 aa). Residue Asn-31 is glycosylated (N-linked (GlcNAc...) asparagine). Intrachain disulfides connect Cys-79-Cys-88, Cys-111-Cys-119, Cys-252-Cys-377, Cys-268-Cys-322, Cys-340-Cys-364, Cys-482-Cys-499, Cys-488-Cys-533, Cys-491-Cys-508, and Cys-502-Cys-514. A glycan (N-linked (GlcNAc...) asparagine) is linked at Asn-334. An N-linked (GlcNAc...) asparagine glycan is attached at Asn-543. A disulfide bridge links Cys-570 with Cys-588. Disordered regions lie at residues 671–829 and 849–884; these read MVAS…TTFP and LPEADEWTGGDAPAFSTSTLLSGDGDSAELEGPPAP. Residues 681 to 697 are compositionally biased toward pro residues; it reads SPDPPARGGPSPSPPTA. Low complexity-rich tracts occupy residues 698–710 and 734–754; these read PKALATPAPDTLP and SPWGPWAGSGSISSPGSTGSP. IPT/TIG domains are found at residues 1070–1160, 1162–1249, and 1252–1375; these read PLIH…FAYQ, PKVH…FKYT, and PNIT…FSYE. N-linked (GlcNAc...) asparagine glycosylation is found at Asn-1183, Asn-1253, and Asn-1330. A helical transmembrane segment spans residues 1491 to 1511; sequence VGLGVGTSLLALGVIIIVLMY. Residues 1507-1539 adopt a coiled-coil conformation; that stretch reads IVLMYRRKSKQALRDYKKVQIQLENLESSVRDR. Over 1512 to 2135 the chain is Cytoplasmic; sequence RRKSKQALRD…AAVENKVTDL (624 aa). The segment at 1883-1908 is disordered; it reads PWHLVKPSDEPEPPRPRRGSLRGGER. The segment covering 1888–1897 has biased composition (basic and acidic residues); it reads KPSDEPEPPR.

This sequence belongs to the plexin family. Monomer, and heterodimer with PLXNB2 after proteolytic processing. Binds RAC1 that has been activated by GTP binding. Interaction with SEMA4D promotes binding of cytoplasmic ligands. Interacts with PLXNA1. Interacts with ARHGEF11 and ARHGEF12. Interacts with ERBB2. Interacts with MET. Interacts with MST1R. Interacts with RRAS. Interacts with RHOD. Interacts with RND1. Interacts with NRP1 and NRP2. Post-translationally, phosphorylated on tyrosine residues by ERBB2 and MET upon SEMA4D binding. Proteolytic processing favors heterodimerization with PLXNB2 and SEMA4D binding. In terms of tissue distribution, highly expressed in fetal kidney, and at slightly lower levels in fetal brain, lung and liver.

It is found in the cell membrane. The protein resides in the secreted. In terms of biological role, receptor for SEMA4D. Plays a role in GABAergic synapse development. Mediates SEMA4A- and SEMA4D-dependent inhibitory synapse development. Plays a role in RHOA activation and subsequent changes of the actin cytoskeleton. Plays a role in axon guidance, invasive growth and cell migration. The polypeptide is Plexin-B1 (PLXNB1) (Homo sapiens (Human)).